A 76-amino-acid polypeptide reads, in one-letter code: DNA polymerase III subunit theta (76 aa).

In terms of assembly, the DNA polymerase holoenzyme is a complex that contains 10 different types of subunits. These subunits are organized into 3 functionally essential subassemblies: the pol III core, the beta sliding clamp processivity factor and the clamp-loading complex. The pol III core (subunits alpha,epsilon and theta) contains the polymerase and the 3'-5' exonuclease proofreading activities. The polymerase is tethered to the template via the sliding clamp processivity factor. The clamp-loading complex assembles the beta processivity factor onto the primer template and plays a central role in the organization and communication at the replication fork. This complex contains delta, delta', psi and chi, and copies of either or both of two different DnaX proteins, gamma and tau. The composition of the holoenzyme is, therefore: (alpha,epsilon,theta)[2]-(gamma/tau)[3]-delta,delta', psi,chi-beta[4].

It carries out the reaction DNA(n) + a 2'-deoxyribonucleoside 5'-triphosphate = DNA(n+1) + diphosphate. Its function is as follows. DNA polymerase III is a complex, multichain enzyme responsible for most of the replicative synthesis in bacteria. This DNA polymerase also exhibits 3' to 5' exonuclease activity. The exact function of the theta subunit is unknown. The sequence is that of DNA polymerase III subunit theta (holE) from Escherichia coli O157:H7.